The sequence spans 106 residues: Large ribosomal subunit protein eL42 (106 aa).

Belongs to the eukaryotic ribosomal protein eL42 family.

In Cyberlindnera jadinii (Torula yeast), this protein is Large ribosomal subunit protein eL42 (RPL44).